Consider the following 285-residue polypeptide: Bifunctional protein FolD (285 aa).

Residues 166-168 and isoleucine 232 each bind NADP(+); that span reads GAS.

Belongs to the tetrahydrofolate dehydrogenase/cyclohydrolase family. Homodimer.

It carries out the reaction (6R)-5,10-methylene-5,6,7,8-tetrahydrofolate + NADP(+) = (6R)-5,10-methenyltetrahydrofolate + NADPH. The enzyme catalyses (6R)-5,10-methenyltetrahydrofolate + H2O = (6R)-10-formyltetrahydrofolate + H(+). It functions in the pathway one-carbon metabolism; tetrahydrofolate interconversion. Functionally, catalyzes the oxidation of 5,10-methylenetetrahydrofolate to 5,10-methenyltetrahydrofolate and then the hydrolysis of 5,10-methenyltetrahydrofolate to 10-formyltetrahydrofolate. The sequence is that of Bifunctional protein FolD from Vibrio atlanticus (strain LGP32) (Vibrio splendidus (strain Mel32)).